Reading from the N-terminus, the 130-residue chain is Small ribosomal subunit protein uS9 (130 aa).

Belongs to the universal ribosomal protein uS9 family.

The sequence is that of Small ribosomal subunit protein uS9 from Bacillus anthracis (strain A0248).